The following is a 115-amino-acid chain: Putative membrane protein insertion efficiency factor (115 aa).

This sequence belongs to the UPF0161 family.

The protein resides in the cell membrane. Functionally, could be involved in insertion of integral membrane proteins into the membrane. The polypeptide is Putative membrane protein insertion efficiency factor (Mycobacterium avium (strain 104)).